We begin with the raw amino-acid sequence, 431 residues long: Large envelope protein (431 aa).

A lipid anchor (N-myristoyl glycine; by host) is attached at Gly2. The tract at residues 2–148 (GNNIKVTFNP…PPLRDTHPHL (147 aa)) is pre-S1. Residues 2–207 (GNNIKVTFNP…PSTTGDPALS (206 aa)) form a pre-S region. Over 2 to 214 (GNNIKVTFNP…ALSPEMSPSS (213 aa)) the chain is Virion surface; in external conformation. Residues 2–286 (GNNIKVTFNP…NGFRWMYLRR (285 aa)) lie on the Intravirion; in internal conformation side of the membrane. N-linked (GlcNAc...) asparagine glycosylation occurs at Asn3. Residues 115-147 (IPRGLVPPQTPTNRDQGRKPTPPTPPLRDTHPH) form a disordered region. Residues 149 to 207 (TMKNQTFHLQGFVDGLRDLTTTERQHNAYRDPFTTLSPAVPTVSTILSPPSTTGDPALS) are pre-S2. The chain crosses the membrane as a helical span at residues 215 to 235 (LLGLLAGLQVVYFLWTKILTI). The Intravirion; in external conformation portion of the chain corresponds to 236-286 (AQNLDWWCTSLSFPGGIPECTGQNSQFQTCKHLPTSCPPTCNGFRWMYLRR). A helical transmembrane segment spans residues 287–307 (FIIYLLVLLLCLIFLLVLLDW). Residues 308–379 (KGLIPVCPLQ…WALARLSWLN (72 aa)) lie on the Virion surface side of the membrane. Asn351 is a glycosylation site (N-linked (GlcNAc...) asparagine; by host). The chain crosses the membrane as a helical span at residues 380 to 400 (LLVPLLQWLGGISLIAWFLLI). Residues 401-406 (WMIWFW) are Intravirion-facing. A helical membrane pass occupies residues 407–429 (GPALLSILPPFIPIFVLFFLIWV). The Virion surface segment spans residues 430-431 (YI).

Belongs to the orthohepadnavirus major surface antigen family. In terms of assembly, in its internal form (Li-HBsAg), interacts with the capsid protein and with the isoform S. Interacts with host chaperone CANX. As to quaternary structure, associates with host chaperone CANX through its pre-S2 N glycan; this association may be essential for isoform M proper secretion. Interacts with isoform L. Interacts with the antigens of satellite virus HDV (HDVAgs); this interaction is required for encapsidation of HDV genomic RNA. Post-translationally, isoform M is N-terminally acetylated by host at a ratio of 90%, and N-glycosylated by host at the pre-S2 region. Myristoylated.

It localises to the virion membrane. Functionally, the large envelope protein exists in two topological conformations, one which is termed 'external' or Le-HBsAg and the other 'internal' or Li-HBsAg. In its external conformation the protein attaches the virus to cell receptors and thereby initiating infection. This interaction determines the species specificity and liver tropism. This attachment induces virion internalization predominantly through caveolin-mediated endocytosis. The large envelope protein also assures fusion between virion membrane and endosomal membrane. In its internal conformation the protein plays a role in virion morphogenesis and mediates the contact with the nucleocapsid like a matrix protein. The middle envelope protein plays an important role in the budding of the virion. It is involved in the induction of budding in a nucleocapsid independent way. In this process the majority of envelope proteins bud to form subviral lipoprotein particles of 22 nm of diameter that do not contain a nucleocapsid. The protein is Large envelope protein of Marmota monax (Woodchuck).